Reading from the N-terminus, the 208-residue chain is Protein disulfide-isomerase A3 (208 aa).

One can recognise a Thioredoxin 1 domain in the interval 1–44 (RLAPEYEAAATRYGVSGYPTLKDGEEAGAYDGPRTADGIVSHLK). Lysine 44 is modified (N6-succinyllysine). Lysine 49 is modified (N6-acetyllysine). Threonine 133 is subject to Phosphothreonine. Residues 151–208 (SRFLQDYFDGNLKRYLKSEPIPETNDGPVKMDATANDVPSPYEVKGFPTIYFSPANKK) enclose the Thioredoxin 2 domain. Residue lysine 163 is modified to N6-acetyllysine.

It belongs to the protein disulfide isomerase family. In terms of assembly, part of the major histocompatibility complex class I (MHC I) peptide loading complex composed of TAP1, TAP2, B2M, MHC heavy chain, TAPBP, PDIA3, and CALR. Interacts with ERP27 and CANX. Interacts with SERPINA2 and SERPINA1. Interacts with ATP2A2. In terms of processing, within the major histocompatibility complex class I (MHC I) peptide loading complex forms reversible disulfide-linked heterodimers with TAPBP as part of its protein folding chaperone activity. This is essential to assist the dynamic assembly of the MHC I complex with high affinity antigens in the endoplasmic reticulum. Phosphorylated. In the caput epididymal spermatozoa, detected in the mid-peice and at low levels in the principal piece. In the cauda epididymal spermatozoa, detected at very low levels in the principal piece and not in the mid-piece (at protein level).

The protein resides in the endoplasmic reticulum. It is found in the endoplasmic reticulum lumen. Its subcellular location is the melanosome. The enzyme catalyses Catalyzes the rearrangement of -S-S- bonds in proteins.. In terms of biological role, protein disulfide isomerase that catalyzes the formation, isomerization, and reduction or oxidation of disulfide bonds in client proteins and functions as a protein folding chaperone. Core component of the major histocompatibility complex class I (MHC I) peptide loading complex where it functions as an essential folding chaperone for TAPBP. Through TAPBP, assists the dynamic assembly of the MHC I complex with high affinity antigens in the endoplasmic reticulum. Therefore, plays a crucial role in the presentation of antigens to cytotoxic T cells in adaptive immunity. This Mesocricetus auratus (Golden hamster) protein is Protein disulfide-isomerase A3.